The primary structure comprises 217 residues: Pyrrolidone-carboxylate peptidase (217 aa).

Residues glutamate 78, cysteine 141, and histidine 168 contribute to the active site.

This sequence belongs to the peptidase C15 family. Homotetramer.

The protein resides in the cytoplasm. The enzyme catalyses Release of an N-terminal pyroglutamyl group from a polypeptide, the second amino acid generally not being Pro.. Its function is as follows. Removes 5-oxoproline from various penultimate amino acid residues except L-proline. In Treponema denticola (strain ATCC 35405 / DSM 14222 / CIP 103919 / JCM 8153 / KCTC 15104), this protein is Pyrrolidone-carboxylate peptidase.